The following is a 706-amino-acid chain: Kinesin-like protein KIP2 (706 aa).

2 stretches are compositionally biased toward low complexity: residues 1–28 and 36–63; these read MIQKMSPSLRRPSTRSSSGSSNIPQSPS and SNLTRNSIRSTSNSGSQSISASSTRSNS. The tract at residues 1–139 is disordered; the sequence is MIQKMSPSLR…QPRSNSHHGS (139 aa). Residues 102 to 493 enclose the Kinesin motor domain; the sequence is SITVTIRPKP…LRFASRAKNV (392 aa). A compositionally biased stretch (polar residues) spans 127–139; that stretch reads RYSQPRSNSHHGS. Position 202–209 (202–209) interacts with ATP; it reads GMTGSGKT. Residues 413-445 are disordered; sequence VGSNIPSPSASGSSSSSGNATNNGTSPSNHIPY. A compositionally biased stretch (low complexity) spans 414 to 441; the sequence is GSNIPSPSASGSSSSSGNATNNGTSPSN. 3 coiled-coil regions span residues 507–541, 569–589, and 612–689; these read NNDGDKDRTIELLRRQLEEQRRMISELKNRSNIGE, MRAENRVLKYKLENCEKLLDK, and TLLE…RALK.

The protein belongs to the TRAFAC class myosin-kinesin ATPase superfamily. Kinesin family. As to quaternary structure, might be dimeric.

It localises to the cytoplasm. The protein localises to the cytoskeleton. Required for assembly of the mitotic spindle. The sequence is that of Kinesin-like protein KIP2 (KIP2) from Saccharomyces cerevisiae (strain ATCC 204508 / S288c) (Baker's yeast).